The primary structure comprises 223 residues: Putative 3-methyladenine DNA glycosylase (223 aa).

The protein belongs to the DNA glycosylase MPG family.

This chain is Putative 3-methyladenine DNA glycosylase, found in Rhodococcus jostii (strain RHA1).